A 437-amino-acid polypeptide reads, in one-letter code: Acyl-coenzyme A thioesterase 9, mitochondrial (437 aa).

Residues 1–21 (MRRAALRLCTLSKGLLAPSRG) constitute a mitochondrion transit peptide. HotDog ACOT-type domains lie at 84 to 207 (SYIE…RDSE) and 287 to 399 (ENSK…EKEV). Lys101 bears the N6-acetyllysine mark.

The protein belongs to the acyl coenzyme A hydrolase family. In terms of assembly, interacts with NYAP1, NYAP2 and MYO16.

The protein localises to the mitochondrion. It localises to the mitochondrion matrix. Its subcellular location is the mitochondrion inner membrane. It carries out the reaction butanoyl-CoA + H2O = butanoate + CoA + H(+). It catalyses the reaction propanoyl-CoA + H2O = propanoate + CoA + H(+). The catalysed reaction is hexadecanoyl-CoA + H2O = hexadecanoate + CoA + H(+). The enzyme catalyses octanoyl-CoA + H2O = octanoate + CoA + H(+). It carries out the reaction decanoyl-CoA + H2O = decanoate + CoA + H(+). It catalyses the reaction tetradecanoyl-CoA + H2O = tetradecanoate + CoA + H(+). The catalysed reaction is 4,8-dimethylnonanoyl-CoA + H2O = 4,8-dimethylnonanoate + CoA + H(+). The enzyme catalyses 3-methylbutanoyl-CoA + H2O = 3-methylbutanoate + CoA + H(+). It carries out the reaction 2-methylpropanoyl-CoA + H2O = 2-methylpropanoate + CoA + H(+). It functions in the pathway lipid metabolism; fatty acid metabolism. Its activity is regulated as follows. Strongly inhibited by NADH and CoA. Functionally, mitochondrial acyl-CoA thioesterase. Catalyzes the hydrolysis of acyl-CoAs into free fatty acids and coenzyme A (CoA), regulating their respective intracellular levels. Regulates both mitochondrial lipid and amino acid metabolism. This Bos taurus (Bovine) protein is Acyl-coenzyme A thioesterase 9, mitochondrial (ACOT9).